A 232-amino-acid polypeptide reads, in one-letter code: Phosphatidylserine decarboxylase proenzyme (232 aa).

The Schiff-base intermediate with substrate; via pyruvic acid role is filled by S190. S190 bears the Pyruvic acid (Ser); by autocatalysis mark.

The protein belongs to the phosphatidylserine decarboxylase family. PSD-A subfamily. As to quaternary structure, heterodimer of a large membrane-associated beta subunit and a small pyruvoyl-containing alpha subunit. Pyruvate serves as cofactor. Post-translationally, is synthesized initially as an inactive proenzyme. Formation of the active enzyme involves a self-maturation process in which the active site pyruvoyl group is generated from an internal serine residue via an autocatalytic post-translational modification. Two non-identical subunits are generated from the proenzyme in this reaction, and the pyruvate is formed at the N-terminus of the alpha chain, which is derived from the carboxyl end of the proenzyme. The post-translation cleavage follows an unusual pathway, termed non-hydrolytic serinolysis, in which the side chain hydroxyl group of the serine supplies its oxygen atom to form the C-terminus of the beta chain, while the remainder of the serine residue undergoes an oxidative deamination to produce ammonia and the pyruvoyl prosthetic group on the alpha chain.

It localises to the cell membrane. It catalyses the reaction a 1,2-diacyl-sn-glycero-3-phospho-L-serine + H(+) = a 1,2-diacyl-sn-glycero-3-phosphoethanolamine + CO2. It functions in the pathway phospholipid metabolism; phosphatidylethanolamine biosynthesis; phosphatidylethanolamine from CDP-diacylglycerol: step 2/2. Its function is as follows. Catalyzes the formation of phosphatidylethanolamine (PtdEtn) from phosphatidylserine (PtdSer). The chain is Phosphatidylserine decarboxylase proenzyme from Rhizobium johnstonii (strain DSM 114642 / LMG 32736 / 3841) (Rhizobium leguminosarum bv. viciae).